A 386-amino-acid polypeptide reads, in one-letter code: Queuine tRNA-ribosyltransferase (386 aa).

Residue aspartate 102 is the Proton acceptor of the active site. Substrate-binding positions include 102-106 (DSGGY), aspartate 156, glutamine 203, and glycine 230. Positions 261–267 (GVGKPDD) are RNA binding. Catalysis depends on aspartate 280, which acts as the Nucleophile. The RNA binding; important for wobble base 34 recognition stretch occupies residues 285-289 (TRSGR). Residues cysteine 318, cysteine 320, cysteine 323, and histidine 349 each contribute to the Zn(2+) site.

The protein belongs to the queuine tRNA-ribosyltransferase family. Homodimer. Within each dimer, one monomer is responsible for RNA recognition and catalysis, while the other monomer binds to the replacement base PreQ1. It depends on Zn(2+) as a cofactor.

The catalysed reaction is 7-aminomethyl-7-carbaguanine + guanosine(34) in tRNA = 7-aminomethyl-7-carbaguanosine(34) in tRNA + guanine. It functions in the pathway tRNA modification; tRNA-queuosine biosynthesis. Functionally, catalyzes the base-exchange of a guanine (G) residue with the queuine precursor 7-aminomethyl-7-deazaguanine (PreQ1) at position 34 (anticodon wobble position) in tRNAs with GU(N) anticodons (tRNA-Asp, -Asn, -His and -Tyr). Catalysis occurs through a double-displacement mechanism. The nucleophile active site attacks the C1' of nucleotide 34 to detach the guanine base from the RNA, forming a covalent enzyme-RNA intermediate. The proton acceptor active site deprotonates the incoming PreQ1, allowing a nucleophilic attack on the C1' of the ribose to form the product. After dissociation, two additional enzymatic reactions on the tRNA convert PreQ1 to queuine (Q), resulting in the hypermodified nucleoside queuosine (7-(((4,5-cis-dihydroxy-2-cyclopenten-1-yl)amino)methyl)-7-deazaguanosine). The polypeptide is Queuine tRNA-ribosyltransferase (Zymomonas mobilis subsp. mobilis (strain ATCC 31821 / ZM4 / CP4)).